The following is a 617-amino-acid chain: Estrogen receptor (617 aa).

Residues 1–54 (MSEEQARAEAPAGARQRRRSELEGYSVSLASLKLSPMYPEEEQRTTGGISSTAH) form a disordered region. Positions 1–186 (MSEEQARAEA…AIGLVKEIRY (186 aa)) are modulating. NR C4-type zinc fingers lie at residues 187 to 207 (CSVC…CEGC) and 223 to 247 (CPAT…LRKC). Positions 187–252 (CSVCSDYASG…RLRKCYEVGM (66 aa)) form a DNA-binding region, nuclear receptor. A hinge region spans residues 253-315 (MKGGFRKERG…GGGVADVVCM (63 aa)). Residues 269–303 (NRRPSGLKERERGYSKAQSGSDVREALPQDGQSSS) are disordered. Residues 316–552 (SPEQVLLLLL…DLLLEMLDAH (237 aa)) form the NR LBD domain. The interval 568–617 (VSSSPTTTATTPTTNTTTTTTTTTHHPSNGSTCPADLPSNPPGPGQSPSP) is disordered. Residues 573–591 (TTTATTPTTNTTTTTTTTT) are compositionally biased toward low complexity. A compositionally biased stretch (pro residues) spans 606-617 (SNPPGPGQSPSP).

It belongs to the nuclear hormone receptor family. NR3 subfamily. In terms of assembly, binds DNA as a homodimer. Can form a heterodimer with ER-beta. Ovary and testis.

It is found in the nucleus. In terms of biological role, the steroid hormones and their receptors are involved in the regulation of eukaryotic gene expression and affect cellular proliferation and differentiation in target tissues. The sequence is that of Estrogen receptor (esr1) from Ictalurus punctatus (Channel catfish).